The chain runs to 615 residues: MERGERVSVPVSGYSRGEGVTVANELKKVDAVVVGFGWAGAIMAKELTEAGLNVVALERGPHRDTYPDGAYPQSIDELTYNIRKKLFQDLSKSTVTIRHDASQTAVPYRQLAAFLPGTGTGGAGLHWSGVHFRVDPVELNLRSHYEARYGKNFIPEGMTIQDFGVSYNELEPFFDQAEKVFGTSGSAWTIKGKMIGKEKGGNFYAPDRSSDFPLPAQKRTYSAQLFAQAAESVGYHPYDMPSANTSGPYTNTYGAQMGPCNFCGYCSGYACYMYSKASPNVNILPALRQEPKFELRNNAYVLRVNLTGDKKRATGVTYLDGQGREVVQPADLVILSAFQFHNVHLMLLSGIGQPYNPITNEGVVGRNFAYQNISTLKALFDKNTTTNPFIGAGGAGVAVDDFNADNFDHGPYGFVGGSPFWVNQAGTKPVSGLPTPKGTPNWGSQWKAAVADTYNHHISMDAHGAHQSYRANYLDLDPNYKNVYGQPLLRMTFDWQDNDIRMAQFMVGKMRKITEAMNPKMIIGGAKGPGTHFDTTVYQTTHMSGGAIMGEDPKTSAVNRYLQSWDVPNVFVPGASAFPQGLGYNPTGMVAALTYWSAKAIREQYLKNPGPLVQA.

The first 22 residues, 1-22, serve as a signal peptide directing secretion; that stretch reads MERGERVSVPVSGYSRGEGVTV. His-542 serves as the catalytic Proton acceptor.

Belongs to the GMC oxidoreductase family. Heterotrimer. FAD serves as cofactor.

The protein localises to the cell membrane. The catalysed reaction is D-gluconate + A = 2-dehydro-D-gluconate + AH2. Part of the heterotrimer that catalyzes the conversion of D-gluconate to 2-dehydro-D-gluconate. This subunit functions as the dehydrogenase. This is Gluconate 2-dehydrogenase flavoprotein from Pantoea cypripedii (Pectobacterium cypripedii).